The following is a 422-amino-acid chain: UDP-N-acetylglucosamine 1-carboxyvinyltransferase (422 aa).

Position 22 to 23 (22 to 23 (KN)) interacts with phosphoenolpyruvate. Arginine 93 is a UDP-N-acetyl-alpha-D-glucosamine binding site. Cysteine 117 functions as the Proton donor in the catalytic mechanism. Cysteine 117 bears the 2-(S-cysteinyl)pyruvic acid O-phosphothioketal mark. UDP-N-acetyl-alpha-D-glucosamine-binding positions include 122 to 126 (RPVDQ), aspartate 305, and isoleucine 327.

This sequence belongs to the EPSP synthase family. MurA subfamily.

Its subcellular location is the cytoplasm. It carries out the reaction phosphoenolpyruvate + UDP-N-acetyl-alpha-D-glucosamine = UDP-N-acetyl-3-O-(1-carboxyvinyl)-alpha-D-glucosamine + phosphate. It participates in cell wall biogenesis; peptidoglycan biosynthesis. Functionally, cell wall formation. Adds enolpyruvyl to UDP-N-acetylglucosamine. The sequence is that of UDP-N-acetylglucosamine 1-carboxyvinyltransferase from Bordetella bronchiseptica (strain ATCC BAA-588 / NCTC 13252 / RB50) (Alcaligenes bronchisepticus).